A 49-amino-acid polypeptide reads, in one-letter code: Large ribosomal subunit protein bL33B (49 aa).

The protein belongs to the bacterial ribosomal protein bL33 family.

This is Large ribosomal subunit protein bL33B (rpmG2) from Lactococcus lactis subsp. cremoris (Streptococcus cremoris).